Consider the following 388-residue polypeptide: Spermosin (388 aa).

Residues 1–22 form the signal peptide; the sequence is MAAINVIFISGAIALFALTGSC. Over residues 29 to 49 the composition is skewed to polar residues; the sequence is FTNKPYATQNPYSPPQTNQPT. The interval 29–98 is disordered; that stretch reads FTNKPYATQN…SENSESENSE (70 aa). Residues 54–64 are compositionally biased toward pro residues; it reads QPGPAPTPAPY. 5 disulfides stabilise this stretch: Cys-116–Cys-251, Cys-163–Cys-179, Cys-265–Cys-330, Cys-295–Cys-310, and Cys-320–Cys-349. The region spanning 130-372 is the Peptidase S1 domain; that stretch reads IVGGAEAVPN…NLEWLCCYMP (243 aa). Active-site charge relay system residues include His-178 and Asp-231. The Charge relay system role is filled by Ser-324.

It belongs to the peptidase S1 family. As to quaternary structure, heterodimer of a heavy chain and either an L1 light chain or an L2 light chain linked by a disulfide bond. In terms of tissue distribution, detected in sperm, but not in unfertilized eggs (at protein level). Expressed in gonad, but not in hepatopancreas, intestine or branchial basket.

It is found in the secreted. It carries out the reaction Hydrolyzes arginyl bonds, preferably with Pro in the P2 position.. With respect to regulation, inhibited by peptidyl-argininals with Pro in the P2 position, diisopropyl fluorophosphate, phenylmethanesulfonyl fluoride, leupeptin, antipain, soybean trypsin inhibitor, aprotinin, ovomucoid, valyl-prolyl-arginyl-chloromethane, glycyl-valyl-arginyl-chloromethane, p-aminobenzamidine, benzamidine, zinc chloride and mercuric chloride. Trypsin-like protease with a narrow substrate specificity. Preferentially hydrolyzes substrates with Pro in the P2 position and Val in the P3 position. Plays a role in fertilization. In Halocynthia roretzi (Sea squirt), this protein is Spermosin.